Consider the following 399-residue polypeptide: Ankyrin repeat domain-containing protein 65 (399 aa).

10 ANK repeats span residues 40–69 (QGWGHLLQAVWRGPAGLVTQLLRQGASVEE), 73–102 (AGRTPLHLAVLRGHAPLVRLLLQRGAPVGA), 106–135 (AGRTALHEAAWHGHSRVAELLLQRGASAAA), 139–168 (TGLTPLHWAAALGHTLLAARLLEAPGPGPA), 176–205 (RGWTAAHWAAAGGRLAVLELLAAGGAGLDG), 207–231 (LLVAAAAGRGAALRFLLARGARVDA), 235–264 (AGATALGLAAALGRSQDIEVLLGHGADPGI), 268–297 (HGRSALHRAAARGHLLAVQLLVTQGAEVDA), 301–330 (LGLTPLHHASREGHVEVAGCLLDRGAQVDA), and 334–363 (LRKTPLHLAAERGHGPTVGLLLSRGASPTL). The disordered stretch occupies residues 377-399 (DLPQALPELGGGEKECEGIESTG).

The chain is Ankyrin repeat domain-containing protein 65 (ANKRD65) from Homo sapiens (Human).